We begin with the raw amino-acid sequence, 398 residues long: S-adenosylmethionine synthase (398 aa).

Residue histidine 17 coordinates ATP. Aspartate 19 contributes to the Mg(2+) binding site. Position 45 (glutamate 45) interacts with K(+). Positions 58 and 101 each coordinate L-methionine. Residues 101–111 (QSPDIAQGVDK) are flexible loop. ATP contacts are provided by residues 176–178 (DGK), 243–244 (RF), aspartate 252, 258–259 (RK), and lysine 279. Position 252 (aspartate 252) interacts with L-methionine. Lysine 283 serves as a coordination point for L-methionine.

This sequence belongs to the AdoMet synthase family. Homotetramer; dimer of dimers. It depends on Mg(2+) as a cofactor. Requires K(+) as cofactor.

Its subcellular location is the cytoplasm. The enzyme catalyses L-methionine + ATP + H2O = S-adenosyl-L-methionine + phosphate + diphosphate. It functions in the pathway amino-acid biosynthesis; S-adenosyl-L-methionine biosynthesis; S-adenosyl-L-methionine from L-methionine: step 1/1. In terms of biological role, catalyzes the formation of S-adenosylmethionine (AdoMet) from methionine and ATP. The overall synthetic reaction is composed of two sequential steps, AdoMet formation and the subsequent tripolyphosphate hydrolysis which occurs prior to release of AdoMet from the enzyme. The sequence is that of S-adenosylmethionine synthase from Staphylococcus aureus (strain Mu3 / ATCC 700698).